Here is a 340-residue protein sequence, read N- to C-terminus: Phenylalanine--tRNA ligase alpha subunit (340 aa).

Position 255 (Glu-255) interacts with Mg(2+).

This sequence belongs to the class-II aminoacyl-tRNA synthetase family. Phe-tRNA synthetase alpha subunit type 1 subfamily. In terms of assembly, tetramer of two alpha and two beta subunits. Requires Mg(2+) as cofactor.

It is found in the cytoplasm. It carries out the reaction tRNA(Phe) + L-phenylalanine + ATP = L-phenylalanyl-tRNA(Phe) + AMP + diphosphate + H(+). This Exiguobacterium sibiricum (strain DSM 17290 / CCUG 55495 / CIP 109462 / JCM 13490 / 255-15) protein is Phenylalanine--tRNA ligase alpha subunit.